The primary structure comprises 151 residues: Cytochrome c-type biogenesis protein CcmE (151 aa).

The Cytoplasmic portion of the chain corresponds to 1-9 (MKGLKKKRR). Residues 10–30 (IQIITLAFVALAGSTALIGYA) traverse the membrane as a helical; Signal-anchor for type II membrane protein segment. Residues 31–151 (MRDGINFFRS…FQHTEDQPQG (121 aa)) are Periplasmic-facing. Positions 123 and 127 each coordinate heme.

Belongs to the CcmE/CycJ family.

The protein resides in the cell inner membrane. In terms of biological role, heme chaperone required for the biogenesis of c-type cytochromes. Transiently binds heme delivered by CcmC and transfers the heme to apo-cytochromes in a process facilitated by CcmF and CcmH. The chain is Cytochrome c-type biogenesis protein CcmE from Cereibacter sphaeroides (strain ATCC 17025 / ATH 2.4.3) (Rhodobacter sphaeroides).